Here is a 300-residue protein sequence, read N- to C-terminus: MNDTTATRCGYVAIVGRPNVGKSTLLNHILGQKLAITSRKPQTTRHNMLGIKTEGAVQAIYVDTPGMHKNGEKALNRYMNKTASAALKDVDVVIFVVDRTRWTDEDQMVLERVQYVQGPVILAINKTDRIEDKSDLMPHLEWLQGQLPNASIVPISAQHGHNLEALESLIASHLPENDHFFPEDQITDRSSRFLAAELVREKIMRQLGAELPYQITVEIEEFKQQGRTLHIHALILVERDGQKKIIIGDKGDRIKRIGSDARRDMELLFDSKVMLNLWVKVKGGWSDDERALRSLGYGDL.

The 169-residue stretch at 8-176 (RCGYVAIVGR…ESLIASHLPE (169 aa)) folds into the Era-type G domain. A G1 region spans residues 16–23 (GRPNVGKS). 16–23 (GRPNVGKS) is a GTP binding site. The interval 42-46 (QTTRH) is G2. The tract at residues 63–66 (DTPG) is G3. GTP-binding positions include 63 to 67 (DTPGM) and 125 to 128 (NKTD). The segment at 125–128 (NKTD) is G4. A G5 region spans residues 155-157 (ISA). Positions 199–283 (VREKIMRQLG…MLNLWVKVKG (85 aa)) constitute a KH type-2 domain.

This sequence belongs to the TRAFAC class TrmE-Era-EngA-EngB-Septin-like GTPase superfamily. Era GTPase family. In terms of assembly, monomer.

It localises to the cytoplasm. Its subcellular location is the cell inner membrane. Functionally, an essential GTPase that binds both GDP and GTP, with rapid nucleotide exchange. Plays a role in 16S rRNA processing and 30S ribosomal subunit biogenesis and possibly also in cell cycle regulation and energy metabolism. In Pseudomonas savastanoi pv. phaseolicola (strain 1448A / Race 6) (Pseudomonas syringae pv. phaseolicola (strain 1448A / Race 6)), this protein is GTPase Era.